The primary structure comprises 443 residues: MDNATVYHFVGIKGSGMSALALILHDKGFKVQGSDITQYTFTQRGLEQAGIDVMAFDEANIHEGLTVIAGNSFTDDHPEIKKAREMGLPVYRYHEFLGHLIEGYTSIGVAGAHGKTSTTGLLAHVLSGVAPTSYLIGDGSGKGTPNARFFVYEADEYRRHFLATKPDYAIMTNIDFDHPDYYTGIDDVYSAFETLAKQVKKGIFAWGDDPELRKLKTDVPVYYYGTSDRDDFQARNIKRSTTGSTFDVYHDDEFLGNFEIHLFGEHNVLNSLAVIAVAYFEKVNMDEIKHELADFKGVKRRFTERKLADMTIIDDYAHHPSEIKATLDAARQKYPDKEIIAVFQPHTFSRTIALMDDFAKSLNLADKVFLTNIFSSARETQGAVSSKDLAQKIVKGGEILTVDNMSPLLDFHDAVVVFMGAGDVQKYERAYEELLSHLSLKNN.

Residue 111 to 117 coordinates ATP; the sequence is GAHGKTS.

This sequence belongs to the MurCDEF family.

The protein localises to the cytoplasm. The catalysed reaction is UDP-N-acetyl-alpha-D-muramate + L-alanine + ATP = UDP-N-acetyl-alpha-D-muramoyl-L-alanine + ADP + phosphate + H(+). It participates in cell wall biogenesis; peptidoglycan biosynthesis. Cell wall formation. The chain is UDP-N-acetylmuramate--L-alanine ligase from Levilactobacillus brevis (strain ATCC 367 / BCRC 12310 / CIP 105137 / JCM 1170 / LMG 11437 / NCIMB 947 / NCTC 947) (Lactobacillus brevis).